A 239-amino-acid chain; its full sequence is Ribonuclease PH (239 aa).

Phosphate-binding positions include Arg-86 and 124-126; that span reads GTR.

Belongs to the RNase PH family. As to quaternary structure, homohexameric ring arranged as a trimer of dimers.

It carries out the reaction tRNA(n+1) + phosphate = tRNA(n) + a ribonucleoside 5'-diphosphate. Its function is as follows. Phosphorolytic 3'-5' exoribonuclease that plays an important role in tRNA 3'-end maturation. Removes nucleotide residues following the 3'-CCA terminus of tRNAs; can also add nucleotides to the ends of RNA molecules by using nucleoside diphosphates as substrates, but this may not be physiologically important. Probably plays a role in initiation of 16S rRNA degradation (leading to ribosome degradation) during starvation. The sequence is that of Ribonuclease PH from Psychromonas ingrahamii (strain DSM 17664 / CCUG 51855 / 37).